The chain runs to 533 residues: Probable ribonuclease ZC3H12D (533 aa).

The RNase NYN domain occupies Leu-92–Ser-246. Residues Lys-251 to Arg-282 form a C3H1-type zinc finger. The tract at residues His-262–Gly-368 is necessary for interaction with ZC3H12A. The interval Leu-302–Pro-335 is disordered.

Belongs to the ZC3H12 family. Interacts with ZC3H12A. It depends on Mg(2+) as a cofactor. Expressed at low levels in bone marrow derived macrophages.

It localises to the cytoplasm. It is found in the P-body. In terms of biological role, may regulate cell growth likely by suppressing RB1 phosphorylation. May function as RNase and regulate the levels of target RNA species (Potential). In association with ZC3H12A enhances the degradation of interleukin IL-6 mRNA level in activated macrophages. Serve as a tumor suppressor in certain leukemia cells. Overexpression inhibits the G1 to S phase progression through suppression of RB1 phosphorylation. The polypeptide is Probable ribonuclease ZC3H12D (Mus musculus (Mouse)).